We begin with the raw amino-acid sequence, 117 residues long: MKETPCPNCGKPLTGDMVRSSNVPCQFRCGHCRERLYEYKVSAPIMLVSLAAIVLLIYLLMLLRNAAGSVLPAVQHVPMAVFALVCAYPVFIVSERMIAKYVIQNGNIIYRGKRKGS.

Transmembrane regions (helical) follow at residues 43 to 63 (APIMLVSLAAIVLLIYLLMLL) and 73 to 93 (AVQHVPMAVFALVCAYPVFIV).

The protein resides in the cell membrane. This is an uncharacterized protein from Bacillus subtilis (strain 168).